We begin with the raw amino-acid sequence, 594 residues long: A-type ATP synthase subunit A (594 aa).

236 to 243 (GPFGSGKT) is an ATP binding site.

Belongs to the ATPase alpha/beta chains family. Has multiple subunits with at least A(3), B(3), C, D, E, F, H, I and proteolipid K(x).

The protein resides in the cell membrane. The catalysed reaction is ATP + H2O + 4 H(+)(in) = ADP + phosphate + 5 H(+)(out). Its function is as follows. Component of the A-type ATP synthase that produces ATP from ADP in the presence of a proton gradient across the membrane. The A chain is the catalytic subunit. The polypeptide is A-type ATP synthase subunit A (Pyrobaculum neutrophilum (strain DSM 2338 / JCM 9278 / NBRC 100436 / V24Sta) (Thermoproteus neutrophilus)).